A 296-amino-acid chain; its full sequence is Short-chain dehydrogenase/reductase ascJ (296 aa).

NADP(+) is bound by residues Ile-28, Asp-66, and Asn-93. Catalysis depends on Ser-155, which acts as the Proton donor. Positions 168, 172, and 205 each coordinate NADP(+). Tyr-168 functions as the Proton acceptor in the catalytic mechanism. The active-site Lowers pKa of active site Tyr is Lys-172.

The protein belongs to the short-chain dehydrogenases/reductases (SDR) family.

It carries out the reaction ascofuranol + A = ascofuranone + AH2. It participates in secondary metabolite biosynthesis; terpenoid biosynthesis. Short-chain dehydrogenase/reductase; part of the asc-2 gene cluster that mediates the biosynthesis of ascofuranone, a strong inhibitor of cyanide-insensitive alternative oxidases and a promising drug candidate against African trypanosomiasis. The first step in the pathway is performed by the non-reducing polyketide synthase ascC that produces orsellinic acid by condensing acetyl-CoA with 3 malonyl-CoA units. Orsellinic acid is then prenylated by the prenyltransferase ascA to yield ilicicolinic acid B. Ilicicolinic acid B is further reduced to ilicicolin B by the reductase ascB. The halogenase ascD then chlorinates ilicicolin B to produce ilicicolin A which is converted to ilicicolin A epoxide by the cytochrome P450 monooxygenase ascE that catalyzes stereoselective epoxidation of the terminal double bond of the prenyl group. Ilicicolin A epoxide is the last common precursor for the biosynthesis of ascofuranone and ascochlorin. The terpene cyclase ascF produces a monocyclic terpene, and the cyclization reaction is proposed to be initiated by protonation of the terminal epoxide of ilicicolin A epoxide to generate a monocyclic tertiarycation, which is followed by a series of hydride and methyl shifts with abstraction of proton, leading to the formation of the (14S,15R,19R)-trimethylcyclohexanone ring structure of ilicicolin C, which is finally reduced to ascochlorin by the dehydrogenase ascG. On the other hand, ilicicolin A epoxide is hydroxylated by the cytochrome P450 monooxygenase ascH, and the resultant product is cyclized by the terpene cyclase ascI to ascofuranol via protonation-initiated epoxide ring opening, which facilitates the 6-endo-tet cyclization to form the tetrahy-drofuran ring. Finally, ascofuranol is oxidized into ascofuranone by ascJ. This chain is Short-chain dehydrogenase/reductase ascJ, found in Acremonium egyptiacum (Oospora egyptiaca).